The chain runs to 451 residues: Serine--tRNA ligase, cytoplasmic (451 aa).

A disulfide bond links Cys-213 and Cys-244. 238–240 (TAE) provides a ligand contact to L-serine. Residues 269–271 (RKE) and Val-285 contribute to the ATP site. L-serine is bound at residue Glu-292. Position 358–361 (358–361 (ELVS)) interacts with ATP. Residue Thr-396 participates in L-serine binding.

It belongs to the class-II aminoacyl-tRNA synthetase family. Type-1 seryl-tRNA synthetase subfamily. In terms of assembly, homodimer. The tRNA molecule binds across the dimer.

The protein localises to the cytoplasm. The protein resides in the cytosol. It catalyses the reaction tRNA(Ser) + L-serine + ATP = L-seryl-tRNA(Ser) + AMP + diphosphate + H(+). Catalyzes the attachment of serine to tRNA(Ser) in a two-step reaction: serine is first activated by ATP to form Ser-AMP and then transferred to the acceptor end of tRNA(Ser). The polypeptide is Serine--tRNA ligase, cytoplasmic (Arabidopsis thaliana (Mouse-ear cress)).